A 58-amino-acid chain; its full sequence is UPF0391 membrane protein ABO_0024 (58 aa).

The next 2 membrane-spanning stretches (helical) occupy residues 4–24 (WALT…GGIA) and 28–48 (ASIA…SLVV).

It belongs to the UPF0391 family.

The protein resides in the cell membrane. This chain is UPF0391 membrane protein ABO_0024, found in Alcanivorax borkumensis (strain ATCC 700651 / DSM 11573 / NCIMB 13689 / SK2).